The chain runs to 369 residues: MSKTISLLKFIICILISLCSFTYAEKIRDLTSIEGIRDNQLIGYGLIVGLDGTGDQSTQTPFTNQSLHNMLSQLGVTIPPDTNMHLKNVAAVIVTANLPPFSHTGEAIDVVVSSMGDAKSLKGGTLLMTPLRGADNQIYAIAQGNILVSEKNNLKKNNSIFSNQVNSGRINHGATIEREINTDFGKKKIINLQLNKEDFGIAQKISDMINVQYPDTATALNSKTVQLNTYANNTIQVHMLSNIQNIDISMPSQEAKVIINPRTGSIVINQEVKLGTCIVSHGDLSILIEKKEEEKINSFLFETLRKNQKESFLKNIINRNYINNNSVKNTSLNNIVRVLNSLGTKPNELISILQLMKNAGCLHAKLEIV.

Residues 1–24 (MSKTISLLKFIICILISLCSFTYA) form the signal peptide.

It belongs to the FlgI family. The basal body constitutes a major portion of the flagellar organelle and consists of four rings (L,P,S, and M) mounted on a central rod.

The protein localises to the bacterial flagellum basal body. Assembles around the rod to form the L-ring and probably protects the motor/basal body from shearing forces during rotation. The chain is Flagellar P-ring protein from Buchnera aphidicola subsp. Schizaphis graminum (strain Sg).